A 167-amino-acid polypeptide reads, in one-letter code: Thiol peroxidase (167 aa).

The region spanning 18–167 is the Thioredoxin domain; sequence VKVGDQAPDF…PIEAAKALVK (150 aa). Cys-60 acts as the Cysteine sulfenic acid (-SOH) intermediate in catalysis. Cysteines 60 and 94 form a disulfide.

It belongs to the peroxiredoxin family. Tpx subfamily. As to quaternary structure, homodimer.

The catalysed reaction is a hydroperoxide + [thioredoxin]-dithiol = an alcohol + [thioredoxin]-disulfide + H2O. Thiol-specific peroxidase that catalyzes the reduction of hydrogen peroxide and organic hydroperoxides to water and alcohols, respectively. Plays a role in cell protection against oxidative stress by detoxifying peroxides. The protein is Thiol peroxidase of Bacillus subtilis (strain 168).